The primary structure comprises 328 residues: 4-hydroxythreonine-4-phosphate dehydrogenase (328 aa).

Substrate-binding residues include His-134 and Thr-135. Positions 164, 209, and 265 each coordinate a divalent metal cation. 3 residues coordinate substrate: Lys-273, Asn-282, and Arg-291.

This sequence belongs to the PdxA family. In terms of assembly, homodimer. Zn(2+) is required as a cofactor. It depends on Mg(2+) as a cofactor. Co(2+) serves as cofactor.

Its subcellular location is the cytoplasm. It catalyses the reaction 4-(phosphooxy)-L-threonine + NAD(+) = 3-amino-2-oxopropyl phosphate + CO2 + NADH. It participates in cofactor biosynthesis; pyridoxine 5'-phosphate biosynthesis; pyridoxine 5'-phosphate from D-erythrose 4-phosphate: step 4/5. Functionally, catalyzes the NAD(P)-dependent oxidation of 4-(phosphooxy)-L-threonine (HTP) into 2-amino-3-oxo-4-(phosphooxy)butyric acid which spontaneously decarboxylates to form 3-amino-2-oxopropyl phosphate (AHAP). The sequence is that of 4-hydroxythreonine-4-phosphate dehydrogenase from Vibrio vulnificus (strain CMCP6).